The primary structure comprises 303 residues: Mitochondrial carrier homolog 2 (303 aa).

The residue at position 2 (alanine 2) is an N-acetylalanine. Residues 2-15 (ADAASQVLLGSGLT) are Mitochondrial intermembrane-facing. 2 Solcar repeats span residues 2-98 (ADAA…YQES) and 118-206 (DHVI…VNTY). The chain crosses the membrane as a helical span at residues 16 to 36 (ILSQPLMYVKVLIQVGYEPLP). Residues 37–77 (PTIGRNIFGRQVCQLPGLFSYAQHIASIDGRRGLFTGLTPR) lie on the Cytoplasmic side of the membrane. Residues 78 to 92 (LCSGVLGTVVHGKVL) traverse the membrane as a helical segment. The Mitochondrial intermembrane segment spans residues 93-135 (QHYQESDKGEELGPGNVQKEVSSSFDHVIKETTREMIARSAAT). A helical membrane pass occupies residues 136 to 156 (LITHPFHVITLRSMVQFIGRE). Residues 157-180 (SKYCGLCDSIITIYREEGILGFFA) lie on the Cytoplasmic side of the membrane. A helical transmembrane segment spans residues 181–199 (GLVPRLLGDILSLWLCNSL). Residues 200–231 (AYLVNTYALDSGVSTMNEMKSYSQAVTGFFAS) are Mitochondrial intermembrane-facing. Residues 232-252 (MLTYPFVLVSNLMAVNNCGLA) form a helical membrane-spanning segment. The Cytoplasmic segment spans residues 253–280 (GGCPPYSPIYTSWIDCWCMLQKEGNMSR). The helical transmembrane segment at 281–303 (GNSLFFRKVPFGKTYCCDLKMLI) threads the bilayer.

This sequence belongs to the mitochondrial carrier (TC 2.A.29) family. As to quaternary structure, interacts with p15BID.

The protein resides in the mitochondrion outer membrane. Its function is as follows. Protein insertase that mediates insertion of transmembrane proteins into the mitochondrial outer membrane. Catalyzes insertion of proteins with alpha-helical transmembrane regions, such as signal-anchored, tail-anchored and multi-pass membrane proteins. Does not mediate insertion of beta-barrel transmembrane proteins. Also acts as a receptor for the truncated form of pro-apoptotic BH3-interacting domain death agonist (p15 BID) and has therefore a critical function in apoptosis. Regulates the quiescence/cycling of hematopoietic stem cells (HSCs). Acts as a regulator of mitochondrial fusion, essential for the naive-to-primed interconversion of embryonic stem cells (ESCs). Acts as a regulator of lipid homeostasis and has a regulatory role in adipocyte differentiation and biology. The protein is Mitochondrial carrier homolog 2 of Homo sapiens (Human).